The primary structure comprises 313 residues: Aspartate carbamoyltransferase catalytic subunit (313 aa).

Carbamoyl phosphate-binding residues include R58 and T59. Position 86 (K86) interacts with L-aspartate. Residues R108, H136, and Q139 each coordinate carbamoyl phosphate. Positions 169 and 223 each coordinate L-aspartate. 2 residues coordinate carbamoyl phosphate: G265 and P266.

Belongs to the aspartate/ornithine carbamoyltransferase superfamily. ATCase family. In terms of assembly, heterododecamer (2C3:3R2) of six catalytic PyrB chains organized as two trimers (C3), and six regulatory PyrI chains organized as three dimers (R2).

It carries out the reaction carbamoyl phosphate + L-aspartate = N-carbamoyl-L-aspartate + phosphate + H(+). Its pathway is pyrimidine metabolism; UMP biosynthesis via de novo pathway; (S)-dihydroorotate from bicarbonate: step 2/3. Its function is as follows. Catalyzes the condensation of carbamoyl phosphate and aspartate to form carbamoyl aspartate and inorganic phosphate, the committed step in the de novo pyrimidine nucleotide biosynthesis pathway. In Anaeromyxobacter dehalogenans (strain 2CP-C), this protein is Aspartate carbamoyltransferase catalytic subunit.